A 253-amino-acid chain; its full sequence is Discoidin-1 subunit B/C (253 aa).

Ser-2 carries the N-acetylserine modification. Positions 2–152 (STQGLVQLIS…ISLRCEFYTQ (151 aa)) constitute an F5/8 type C domain. Residues 79 to 81 (RGD) carry the Cell attachment site motif.

In terms of assembly, tetramer of four different chains (A to D). In terms of tissue distribution, stalk cells.

It is found in the cytoplasm. Its function is as follows. Galactose- and N-acetylgalactosamine-binding lectin. May play a role in cell-substratum adhesion rather than in cell-cell adhesion. May be necessary for the maintenance of normal elongate morphology during aggregation. The sequence is that of Discoidin-1 subunit B/C (dscC-1) from Dictyostelium discoideum (Social amoeba).